Here is a 156-residue protein sequence, read N- to C-terminus: Protein-export protein SecB (156 aa).

The protein belongs to the SecB family. As to quaternary structure, homotetramer, a dimer of dimers. One homotetramer interacts with 1 SecA dimer.

Its subcellular location is the cytoplasm. In terms of biological role, one of the proteins required for the normal export of preproteins out of the cell cytoplasm. It is a molecular chaperone that binds to a subset of precursor proteins, maintaining them in a translocation-competent state. It also specifically binds to its receptor SecA. This Xanthobacter autotrophicus (strain ATCC BAA-1158 / Py2) protein is Protein-export protein SecB.